Reading from the N-terminus, the 143-residue chain is Interferon gamma (143 aa).

Pyrrolidone carboxylic acid is present on glutamine 1. N-linked (GlcNAc...) asparagine glycosylation is found at asparagine 25 and asparagine 97.

Belongs to the type II (or gamma) interferon family. As to quaternary structure, homodimer. Interacts with IFNGR1 (via extracellular domain); this interaction promotes IFNGR1 dimerization.

The protein localises to the secreted. Functionally, type II interferon produced by immune cells such as T-cells and NK cells that plays crucial roles in antimicrobial, antiviral, and antitumor responses by activating effector immune cells and enhancing antigen presentation. Primarily signals through the JAK-STAT pathway after interaction with its receptor IFNGR1 to affect gene regulation. Upon IFNG binding, IFNGR1 intracellular domain opens out to allow association of downstream signaling components JAK2, JAK1 and STAT1, leading to STAT1 activation, nuclear translocation and transcription of IFNG-regulated genes. Many of the induced genes are transcription factors such as IRF1 that are able to further drive regulation of a next wave of transcription. Plays a role in class I antigen presentation pathway by inducing a replacement of catalytic proteasome subunits with immunoproteasome subunits. In turn, increases the quantity, quality, and repertoire of peptides for class I MHC loading. Increases the efficiency of peptide generation also by inducing the expression of activator PA28 that associates with the proteasome and alters its proteolytic cleavage preference. Up-regulates as well MHC II complexes on the cell surface by promoting expression of several key molecules such as cathepsins B/CTSB, H/CTSH, and L/CTSL. Participates in the regulation of hematopoietic stem cells during development and under homeostatic conditions by affecting their development, quiescence, and differentiation. The protein is Interferon gamma (IFNG) of Pan troglodytes (Chimpanzee).